The primary structure comprises 565 residues: Putative pentatricopeptide repeat-containing protein At3g05240 (565 aa).

13 PPR repeats span residues 37–70 (NVIPLSRLIDFCTTCPETMNLSYARSVFESIDCP), 71–105 (SVYIWNSMIRGYSNSPNPDKALIFYQEMLRKGYSP), 106–140 (DYFTFPYVLKACSGLRDIQFGSCVHGFVVKTGFEV), 141–171 (NMYVSTCLLHMYMCCGEVNYGLRVFEDIPQW), 172–206 (NVVAWGSLISGFVNNNRFSDAIEAFREMQSNGVKA), 207–241 (NETIMVDLLVACGRCKDIVTGKWFHGFLQGLGFDP), 250–280 (NVILATSLIDMYAKCGDLRTARYLFDGMPER), 281–315 (TLVSWNSIITGYSQNGDAEEALCMFLDMLDLGIAP), 316–350 (DKVTFLSVIRASMIQGCSQLGQSIHAYVSKTGFVK), 351–381 (DAAIVCALVNMYAKTGDAESAKKAFEDLEKK), 382–416 (DTIAWTVVIIGLASHGHGNEALSIFQRMQEKGNAT), 418–448 (DGITYLGVLYACSHIGLVEEGQRYFAEMRDL), and 454–484 (TVEHYGCMVDILSRAGRFEEAERLVKTMPVK). The interval 489-564 (IWGALLNGCD…VLGHSSVETM (76 aa)) is type E motif.

Belongs to the PPR family. PCMP-E subfamily.

In Arabidopsis thaliana (Mouse-ear cress), this protein is Putative pentatricopeptide repeat-containing protein At3g05240 (PCMP-E82).